A 39-amino-acid chain; its full sequence is LIM/homeobox protein xLIM-2B (39 aa).

Positions 1–39 (KAKQLETLKAAFAATPKPTRHIREQLAQETGLNMRVIQV) form a DNA-binding region, homeobox.

Its subcellular location is the nucleus. The protein is LIM/homeobox protein xLIM-2B (lim2b) of Xenopus laevis (African clawed frog).